Reading from the N-terminus, the 434-residue chain is MPNRKASRNAYYFFVQEKIPELRRRGLPVARVADAIPYCSSDWALLREEEKEKYAEMAREWRAAQGKDPGPSEKQKPVFTPLRRPGMLVPKQNVSPPDMSALSLKGDQALLGGIFYFLNIFSHGELPPHCEQRFLPCEIGCVKYSLQEGIMADFHSFINPGEIPRGFRFHCQAASDSSHKIPISNFERGHNQATVLQNLYRFIHPNPGNWPPIYCKSDDRTRVNWCLKHMAKASEIRQDLQLLTVEDLVVGIYQQKFLKEPSKTWIRSLLDVAMWDYSSNTRCKWHEENDILFCALAVCKKIAYCISNSLATLFGIQLTEAHVPLQDYEASNSVTPKMVVLDAGRYQKLRVGSSGFSHFNSSNEEQRSNTPIGDYPSRAKISGQNSSVRGRGITRLLESISNSSSNIHKFSNCDTSLSPYMSQKDGYKSFSSLS.

The segment at residues Arg4 to Glu73 is a DNA-binding region (HMG box). Positions Ser357–Asn385 are disordered.

Belongs to the maelstrom family. Interacts with SMARCB1, SIN3B and DDX4. Interacts with piRNA-associated proteins TDRD1, PIWIL1 and PIWIL2. Interacts with TEX19. In terms of tissue distribution, testis-specific. Expressed in various cancer cell lines, probably due to demethylation of its promoter.

The protein resides in the cytoplasm. It localises to the nucleus. Functionally, plays a central role during spermatogenesis by repressing transposable elements and preventing their mobilization, which is essential for the germline integrity. Acts via the piRNA metabolic process, which mediates the repression of transposable elements during meiosis by forming complexes composed of piRNAs and Piwi proteins and governs the methylation and subsequent repression of transposons. Its association with piP-bodies suggests a participation in the secondary piRNAs metabolic process. Required for the localization of germ-cell factors to the meiotic nuage. This is Protein maelstrom homolog (MAEL) from Homo sapiens (Human).